We begin with the raw amino-acid sequence, 100 residues long: DNA-binding protein HU (100 aa).

This sequence belongs to the bacterial histone-like protein family.

Functionally, histone-like DNA-binding protein which is capable of wrapping DNA to stabilize it, and thus to prevent its denaturation under extreme environmental conditions. This chain is DNA-binding protein HU (hup), found in Synechocystis sp. (strain ATCC 27184 / PCC 6803 / Kazusa).